The sequence spans 132 residues: FPRL1 inhibitory protein (132 aa).

The signal sequence occupies residues 1 to 28 (MKKNITKVIIASTVIATGLLTQTNDAKA).

Belongs to the CHIPS/FLIPr family.

Its subcellular location is the secreted. In terms of biological role, may be involved in countering the first line of host defense mechanisms. Impairs the leukocyte response to FPRL1 agonists by binding directly to host FPRL1. This chain is FPRL1 inhibitory protein (flr), found in Staphylococcus aureus (strain MW2).